The chain runs to 482 residues: UDP-N-acetylmuramoyl-L-alanyl-D-glutamate--2,6-diaminopimelate ligase 1 (482 aa).

Residue serine 30 coordinates UDP-N-acetyl-alpha-D-muramoyl-L-alanyl-D-glutamate. Residue 110–116 participates in ATP binding; the sequence is GTNGKTT. UDP-N-acetyl-alpha-D-muramoyl-L-alanyl-D-glutamate contacts are provided by residues 152–153, serine 179, and arginine 187; that span reads TT. The residue at position 219 (lysine 219) is an N6-carboxylysine. Meso-2,6-diaminopimelate is bound by residues arginine 378, 402 to 405, glycine 452, and glutamate 456; that span reads DNPR. The short motif at 402–405 is the Meso-diaminopimelate recognition motif element; it reads DNPR.

Belongs to the MurCDEF family. MurE subfamily. Requires Mg(2+) as cofactor. In terms of processing, carboxylation is probably crucial for Mg(2+) binding and, consequently, for the gamma-phosphate positioning of ATP.

It is found in the cytoplasm. It carries out the reaction UDP-N-acetyl-alpha-D-muramoyl-L-alanyl-D-glutamate + meso-2,6-diaminopimelate + ATP = UDP-N-acetyl-alpha-D-muramoyl-L-alanyl-gamma-D-glutamyl-meso-2,6-diaminopimelate + ADP + phosphate + H(+). It participates in cell wall biogenesis; peptidoglycan biosynthesis. In terms of biological role, catalyzes the addition of meso-diaminopimelic acid to the nucleotide precursor UDP-N-acetylmuramoyl-L-alanyl-D-glutamate (UMAG) in the biosynthesis of bacterial cell-wall peptidoglycan. This chain is UDP-N-acetylmuramoyl-L-alanyl-D-glutamate--2,6-diaminopimelate ligase 1, found in Clostridium acetobutylicum (strain ATCC 824 / DSM 792 / JCM 1419 / IAM 19013 / LMG 5710 / NBRC 13948 / NRRL B-527 / VKM B-1787 / 2291 / W).